The primary structure comprises 205 residues: Arginine exporter protein ArgO (205 aa).

A run of 6 helical transmembrane segments spans residues 1–21, 42–62, 67–87, 111–131, 147–167, and 182–202; these read MLAVFLQGFALSAAMILPLGP, LCALSDIILICAGIFGGSALL, LLLALVTWGGVAFLLWYGWGA, IIVTLLAVTWLNPHVYLDTFV, WFAFGAVSASVAWFFALALLA, and VINLLVGGVMWFIAFQLARQG.

The protein belongs to the LysE/ArgO transporter (TC 2.A.75) family.

Its subcellular location is the cell inner membrane. It catalyses the reaction L-arginine(in) = L-arginine(out). Involved in the export of arginine. Important to control the intracellular level of arginine and the correct balance between arginine and lysine. This is Arginine exporter protein ArgO from Yersinia enterocolitica serotype O:8 / biotype 1B (strain NCTC 13174 / 8081).